The primary structure comprises 3469 residues: Abnormal spindle-like microcephaly-associated protein homolog (3469 aa).

Phosphoserine is present on residues Ser-279, Ser-282, Ser-366, Ser-391, and Ser-419. The disordered stretch occupies residues 469-488 (VKDISSHSHNKQPKRRPILS). A compositionally biased stretch (basic residues) spans 476–485 (SHNKQPKRRP). Ser-599 bears the Phosphoserine mark. The Calponin-homology (CH) 1 domain maps to 911–1047 (KASKEILLAF…LLWKIVFAFQ (137 aa)). A coiled-coil region spans residues 1048 to 1069 (VNISLNLDQLKEEIAFLKHTKS). At Ser-1094 the chain carries Phosphoserine. The 152-residue stretch at 1101-1252 (GENIKLLMDW…YLSFLCARLL (152 aa)) folds into the Calponin-homology (CH) 2 domain. IQ domains are found at residues 1338–1369 (QNKA…IVLQ), 1384–1413 (YLWA…KLKS), 1573–1604 (LKKI…VIIQ), 1623–1652 (TRSA…SVIK), 1646–1675 (ILTS…ATIK), 1669–1700 (LKNA…LFIQ), 1719–1748 (MRES…AVIS), 1742–1773 (QRKA…IIIQ), 1792–1821 (VKKA…AAVK), 1815–1844 (QSVA…SIIK), 1865–1894 (TKAA…AAMK), 1888–1919 (EHQA…LVIQ), 1938–1969 (LRHS…VIIQ), 1961–1992 (QHKC…LLIQ), 2011–2040 (TKAA…AAIT), 2034–2065 (CNKA…IIIQ), 2084–2115 (LKKT…TFIK), 2107–2138 (MHRA…IVIQ), 2157–2188 (FLKA…TVIQ), 2180–2209 (LQIA…ITKT), 2230–2261 (LRHS…TLIQ), 2253–2284 (MHIA…IWIQ), 2302–2333 (LQNA…TFIQ), 2325–2356 (MHRA…VVIQ), 2375–2406 (QRHS…ILIQ), 2398–2429 (MHSS…IFIQ), 2448–2479 (LRKA…VLIQ), 2521–2552 (QWHS…IIIQ), 2657–2686 (HTQA…AATR), 2680–2711 (MHLA…VVIQ), 2730–2759 (VQKS…EKMA), 2806–2837 (QSRA…RIQF), 2851–2882 (QKRA…VVLQ), 2901–2930 (IRSS…STIK), 2946–2977 (KVKA…KIIQ), 3021–3050 (RHQA…AALN), 3071–3102 (LKKS…RLLH), and 3173–3202 (QNRA…GIIK).

The protein localises to the cytoplasm. Its subcellular location is the cytoskeleton. It localises to the spindle. The protein resides in the nucleus. In terms of biological role, probable role in mitotic spindle regulation and coordination of mitotic processes. May have a preferential role in regulating neurogenesis. The protein is Abnormal spindle-like microcephaly-associated protein homolog (ASPM) of Saimiri boliviensis boliviensis (Bolivian squirrel monkey).